Reading from the N-terminus, the 393-residue chain is Formate-dependent phosphoribosylglycinamide formyltransferase (393 aa).

Residues E22 to L23 and E82 contribute to the N(1)-(5-phospho-beta-D-ribosyl)glycinamide site. ATP-binding positions include R114, K155, S160–Q165, E195–I198, and E203. Residues R119–L308 enclose the ATP-grasp domain. Residues E267 and E279 each coordinate Mg(2+). Residues D286, K356, and R363–R364 each bind N(1)-(5-phospho-beta-D-ribosyl)glycinamide.

It belongs to the PurK/PurT family. Homodimer.

It catalyses the reaction N(1)-(5-phospho-beta-D-ribosyl)glycinamide + formate + ATP = N(2)-formyl-N(1)-(5-phospho-beta-D-ribosyl)glycinamide + ADP + phosphate + H(+). It participates in purine metabolism; IMP biosynthesis via de novo pathway; N(2)-formyl-N(1)-(5-phospho-D-ribosyl)glycinamide from N(1)-(5-phospho-D-ribosyl)glycinamide (formate route): step 1/1. Involved in the de novo purine biosynthesis. Catalyzes the transfer of formate to 5-phospho-ribosyl-glycinamide (GAR), producing 5-phospho-ribosyl-N-formylglycinamide (FGAR). Formate is provided by PurU via hydrolysis of 10-formyl-tetrahydrofolate. This chain is Formate-dependent phosphoribosylglycinamide formyltransferase, found in Azoarcus sp. (strain BH72).